A 98-amino-acid polypeptide reads, in one-letter code: Aspartyl/glutamyl-tRNA(Asn/Gln) amidotransferase subunit C (98 aa).

Belongs to the GatC family. In terms of assembly, heterotrimer of A, B and C subunits.

The catalysed reaction is L-glutamyl-tRNA(Gln) + L-glutamine + ATP + H2O = L-glutaminyl-tRNA(Gln) + L-glutamate + ADP + phosphate + H(+). The enzyme catalyses L-aspartyl-tRNA(Asn) + L-glutamine + ATP + H2O = L-asparaginyl-tRNA(Asn) + L-glutamate + ADP + phosphate + 2 H(+). Its function is as follows. Allows the formation of correctly charged Asn-tRNA(Asn) or Gln-tRNA(Gln) through the transamidation of misacylated Asp-tRNA(Asn) or Glu-tRNA(Gln) in organisms which lack either or both of asparaginyl-tRNA or glutaminyl-tRNA synthetases. The reaction takes place in the presence of glutamine and ATP through an activated phospho-Asp-tRNA(Asn) or phospho-Glu-tRNA(Gln). The protein is Aspartyl/glutamyl-tRNA(Asn/Gln) amidotransferase subunit C of Acidothermus cellulolyticus (strain ATCC 43068 / DSM 8971 / 11B).